The following is a 341-amino-acid chain: Heat-inducible transcription repressor HrcA (341 aa).

The protein belongs to the HrcA family.

Functionally, negative regulator of class I heat shock genes (grpE-dnaK-dnaJ and groELS operons). Prevents heat-shock induction of these operons. The chain is Heat-inducible transcription repressor HrcA from Leptothrix cholodnii (strain ATCC 51168 / LMG 8142 / SP-6) (Leptothrix discophora (strain SP-6)).